Reading from the N-terminus, the 416-residue chain is tRNA(Met) cytidine acetate ligase (416 aa).

Residues 7–20 (VVEY…HLYH), glycine 101, asparagine 163, and arginine 188 each bind ATP.

It belongs to the TmcAL family.

It localises to the cytoplasm. It carries out the reaction cytidine(34) in elongator tRNA(Met) + acetate + ATP = N(4)-acetylcytidine(34) in elongator tRNA(Met) + AMP + diphosphate. Functionally, catalyzes the formation of N(4)-acetylcytidine (ac(4)C) at the wobble position of elongator tRNA(Met), using acetate and ATP as substrates. First activates an acetate ion to form acetyladenylate (Ac-AMP) and then transfers the acetyl group to tRNA to form ac(4)C34. The chain is tRNA(Met) cytidine acetate ligase from Bacillus licheniformis (strain ATCC 14580 / DSM 13 / JCM 2505 / CCUG 7422 / NBRC 12200 / NCIMB 9375 / NCTC 10341 / NRRL NRS-1264 / Gibson 46).